Here is a 968-residue protein sequence, read N- to C-terminus: RNA polymerase-associated protein RapA (968 aa).

The 171-residue stretch at 164-334 (DVGRRHAPRV…FARLRLLDPN (171 aa)) folds into the Helicase ATP-binding domain. 177–184 (DEVGLGKT) is a binding site for ATP. The DEAH box motif lies at 280–283 (DEAH). Residues 490–685 (RVEWLMGYLT…ALKAQLEQGR (196 aa)) form the Helicase C-terminal domain.

Belongs to the SNF2/RAD54 helicase family. RapA subfamily. As to quaternary structure, interacts with the RNAP. Has a higher affinity for the core RNAP than for the holoenzyme. Its ATPase activity is stimulated by binding to RNAP.

Its function is as follows. Transcription regulator that activates transcription by stimulating RNA polymerase (RNAP) recycling in case of stress conditions such as supercoiled DNA or high salt concentrations. Probably acts by releasing the RNAP, when it is trapped or immobilized on tightly supercoiled DNA. Does not activate transcription on linear DNA. Probably not involved in DNA repair. The protein is RNA polymerase-associated protein RapA of Salmonella typhi.